A 232-amino-acid polypeptide reads, in one-letter code: Small ribosomal subunit protein uS2 (232 aa).

Belongs to the universal ribosomal protein uS2 family.

The protein is Small ribosomal subunit protein uS2 of Syntrophomonas wolfei subsp. wolfei (strain DSM 2245B / Goettingen).